A 180-amino-acid polypeptide reads, in one-letter code: Crossover junction endodeoxyribonuclease RuvC (180 aa).

Residues Asp7, Glu66, and Asp138 contribute to the active site. Mg(2+) is bound by residues Asp7, Glu66, and Asp138.

The protein belongs to the RuvC family. In terms of assembly, homodimer which binds Holliday junction (HJ) DNA. The HJ becomes 2-fold symmetrical on binding to RuvC with unstacked arms; it has a different conformation from HJ DNA in complex with RuvA. In the full resolvosome a probable DNA-RuvA(4)-RuvB(12)-RuvC(2) complex forms which resolves the HJ. It depends on Mg(2+) as a cofactor.

It is found in the cytoplasm. It carries out the reaction Endonucleolytic cleavage at a junction such as a reciprocal single-stranded crossover between two homologous DNA duplexes (Holliday junction).. Functionally, the RuvA-RuvB-RuvC complex processes Holliday junction (HJ) DNA during genetic recombination and DNA repair. Endonuclease that resolves HJ intermediates. Cleaves cruciform DNA by making single-stranded nicks across the HJ at symmetrical positions within the homologous arms, yielding a 5'-phosphate and a 3'-hydroxyl group; requires a central core of homology in the junction. The consensus cleavage sequence is 5'-(A/T)TT(C/G)-3'. Cleavage occurs on the 3'-side of the TT dinucleotide at the point of strand exchange. HJ branch migration catalyzed by RuvA-RuvB allows RuvC to scan DNA until it finds its consensus sequence, where it cleaves and resolves the cruciform DNA. In Herminiimonas arsenicoxydans, this protein is Crossover junction endodeoxyribonuclease RuvC.